The sequence spans 515 residues: MSQRFAPGQAPVQSRYQPPPPAPGMRPYPPPGASFPPRGFPLHPNTTQPVPGTANVAGVPGVPGVPGVPGPSLLQRAAQQPGFQSSLRGTGAGGGGVGSGGGSKRSNESRSLGGGGSKSDFATAKKKKKLAEKILPQKVRDLVPESQAYMDLLTFERKLDATIMRKRLDIQEALKRPMKQKRKLRIFISNTFYPSKEPTNDGEEGAVASWELRVEGRLLEDGKGDPNTKIKRKFSSFFKSLVIELDKELYGPDNHLVEWHRTHTTQETDGFQVKRPGDRNVRCTILLLLDYQPLQFKLDPRLARLLGVHTQTRPVIISALWQYIKTHKLQDAHEREYINCDKYLEQIFSCQRMKFAEIPQRLNPLLHPPDPIVINHFIESGAENKQTACYDIDVEVDDTLKNQMNSFLMSTASQQEIQGLDTKIHETVDTINQMKTNREFFLSFAKDPQMFIHRWIISETRDLKLMTDVAGNPEEERRAEFYYQPWTHEAVSRYFFTKVNQKRAELEQALGIRNG.

The disordered stretch occupies residues Met1–Ala124. Pro residues predominate over residues Gln17–Ser34. Residues Pro49 to Val62 are compositionally biased toward low complexity. The segment covering Thr90 to Ser103 has biased composition (gly residues). The interval Gly116–Glu204 is DNA-binding. In terms of domain architecture, SWIB/MDM2 spans Tyr291–Pro368.

As to quaternary structure, there are 2 distinct Brahma complexes in the fruit fly, the Brahma-associated proteins (BAP) and Polybromo-containing BAP (PBAP) complexes, which are composed of common subunits Brm, Mor, Snr1/Bap45, Bap111/Dalo, Bap55, Bap60 and Act42A/Bap47, and additional signature subunits osa in the BAP complex and Polybromo and Bap170 in the PBAP complex. Interacts with sisA and sc. Interacts with mor. Interacts with p53. Interacts with erm (via N-terminal). Interacts with akirin; interaction is immune stimulation-dependent; activates selected Rel target gene promoters.

Involved in the recruitment and site-specific anchoring of the Brahma complex at specific promoter sites. The Brahma complex is a multiprotein complex which is the equivalent of the yeast SWI/SNF complex and acts by remodeling the chromatin by catalyzing an ATP-dependent alteration in the structure of nucleosomal DNA. This complex can both serve as a transcriptional coactivator or corepressor, depending on the context. Participates in X-chromosomal dosage compensation. Participates in neurogenesis. This chain is Brahma-associated protein of 60 kDa (Bap60), found in Drosophila melanogaster (Fruit fly).